A 130-amino-acid polypeptide reads, in one-letter code: MNFVFLWAALGGAIGSSLRYFVGKVMPSKFLMFESFPLGTFSVNLIGCFVIGFMGHLAAKKVFGDDFGIFFVTGVLGGFTTFSSYGLDTLKLLQKSQYLEAVSYVLGTNLLGLIGVAIGWFLAKNFVGVN.

Transmembrane regions (helical) follow at residues F3 to G23, L38 to A58, F67 to L87, and V102 to L122. Positions 77 and 80 each coordinate Na(+).

It belongs to the fluoride channel Fluc/FEX (TC 1.A.43) family.

Its subcellular location is the cell inner membrane. It catalyses the reaction fluoride(in) = fluoride(out). Na(+) is not transported, but it plays an essential structural role and its presence is essential for fluoride channel function. Fluoride-specific ion channel. Important for reducing fluoride concentration in the cell, thus reducing its toxicity. The sequence is that of Fluoride-specific ion channel FluC from Helicobacter pylori (strain HPAG1).